Here is a 334-residue protein sequence, read N- to C-terminus: Methionine adenosyltransferase 2 subunit beta (334 aa).

NADP(+)-binding positions include 37–40, 60–62, 71–72, Cys93, Arg97, Tyr159, and Leu185; these read TGLL, FRR, and NL. Thr309 is subject to Phosphothreonine. The tract at residues 319–334 is required for interaction with MAT2A; that stretch reads LWPFLIDKRWRQTVFH.

The protein belongs to the dTDP-4-dehydrorhamnose reductase family. MAT2B subfamily. In terms of assembly, heterotrimer; composed of a catalytic MAT2A homodimer that binds one regulatory MAT2B chain. Heterohexamer; composed of a central, catalytic MAT2A homotetramer flanked on either side by a regulatory MAT2B chain. NADP binding increases the affinity for MAT2A.

Its pathway is amino-acid biosynthesis; S-adenosyl-L-methionine biosynthesis; S-adenosyl-L-methionine from L-methionine: step 1/1. In terms of biological role, regulatory subunit of S-adenosylmethionine synthetase 2, an enzyme that catalyzes the formation of S-adenosylmethionine from methionine and ATP. Regulates MAT2A catalytic activity by changing its kinetic properties, increasing its affinity for L-methionine. Can bind NADP (in vitro). The sequence is that of Methionine adenosyltransferase 2 subunit beta (MAT2B) from Bos taurus (Bovine).